The following is a 291-amino-acid chain: Translocon-associated protein subunit alpha (291 aa).

A signal peptide spans 1-20 (MRLLPRLLLLLLLVFPATVL). Topologically, residues 21 to 207 (FRGGPRGSLA…EREDGLDGET (187 aa)) are lumenal. Residues 34 to 83 (DLTEDEETVEDSIIEDEDDEAEVEEDEPTDLVEDKEEEDVSGEPEASPSA) form a disordered region. Positions 35-75 (LTEDEETVEDSIIEDEDDEAEVEEDEPTDLVEDKEEEDVSG) are enriched in acidic residues. N-linked (GlcNAc...) asparagine glycosylation is found at N136 and N191. The helical transmembrane segment at 208–228 (IFMYMFLAGLGLLVIVGLHQL) threads the bilayer. Topologically, residues 229 to 291 (LESRKRKRPV…AQKRSVGSDE (63 aa)) are cytoplasmic. Residue S247 is modified to Phosphoserine. T260 is subject to Phosphothreonine. Residues 263-291 (QIMQSRRDKASPRRLPRKRAQKRSVGSDE) form a disordered region. S273 is subject to Phosphoserine. Residues 274–284 (PRRLPRKRAQK) show a composition bias toward basic residues.

This sequence belongs to the TRAP-alpha family. As to quaternary structure, heterotetramer of TRAP-alpha, TRAP-beta, TRAP-delta and TRAP-gamma. Interacts with palmitoylated calnexin (CALX), the interaction is required for efficient folding of glycosylated proteins. Phosphorylated in its cytoplasmic tail.

It is found in the endoplasmic reticulum membrane. Functionally, TRAP proteins are part of a complex whose function is to bind calcium to the ER membrane and thereby regulate the retention of ER resident proteins. May be involved in the recycling of the translocation apparatus after completion of the translocation process or may function as a membrane-bound chaperone facilitating folding of translocated proteins. The sequence is that of Translocon-associated protein subunit alpha (SSR1) from Pongo abelii (Sumatran orangutan).